The chain runs to 379 residues: DnaJ homolog subfamily B member 14 (379 aa).

The Cytoplasmic portion of the chain corresponds to 1–244 (MEGNRDEAEK…GHEREEERGD (244 aa)). Residues 55 to 94 (STAGNSPHCRKPSGGGDQSKPNCTKDSSSGSGESGKGYTK) form a disordered region. One can recognise a J domain in the interval 108 to 172 (NYYEVLGVTK…EKRKQYDLTG (65 aa)). The interval 221-241 (GRAGYSNQHQHRHSGHEREEE) is disordered. A helical transmembrane segment spans residues 245 to 265 (GGFSVFIQLMPIIVLILVSLL). The Lumenal segment spans residues 266–379 (SQLMVSNPPY…ERLTSIYKGG (114 aa)).

Belongs to the DnaJ family. DNAJB12/DNAJB14 subfamily. As to quaternary structure, interacts (via J domain) with HSPA8/Hsc70. Forms a multiprotein complex, at least composed of DNAJB12, DNAJB14, HSPA8/Hsc70 and SGTA; interaction with DNAJB14 and HSPA8/Hsc70 is direct.

Its subcellular location is the endoplasmic reticulum membrane. The protein localises to the nucleus membrane. Functionally, acts as a co-chaperone with HSPA8/Hsc70; required to promote protein folding and trafficking, prevent aggregation of client proteins, and promote unfolded proteins to endoplasmic reticulum-associated degradation (ERAD) pathway. Acts by determining HSPA8/Hsc70's ATPase and polypeptide-binding activities. Can also act independently of HSPA8/Hsc70: together with DNAJB12, acts as a chaperone that promotes maturation of potassium channels KCND2 and KCNH2 by stabilizing nascent channel subunits and assembling them into tetramers. While stabilization of nascent channel proteins is dependent on HSPA8/Hsc70, the process of oligomerization of channel subunits is independent of HSPA8/Hsc70. When overexpressed, forms membranous structures together with DNAJB12 and HSPA8/Hsc70 within the nucleus; the role of these structures, named DJANGOs, is still unclear. This Bos taurus (Bovine) protein is DnaJ homolog subfamily B member 14 (DNAJB14).